A 364-amino-acid polypeptide reads, in one-letter code: Geissoschizine synthase (364 aa).

Residues 24-343 (GILHPIKFSR…DYLSTAMERI (320 aa)) form the Enoyl reductase (ER) domain. C51 is a binding site for Zn(2+). N52 contacts NADP(+). Residues H73, E74, C104, C107, C110, C118, and C168 each contribute to the Zn(2+) site. Residues L194, G196, L197, S216, T217, S218, K221, R261, V280, A282, S304, T306, and R351 each contribute to the NADP(+) site.

This sequence belongs to the zinc-containing alcohol dehydrogenase family. Class-III subfamily. In terms of assembly, homodimer. Requires Zn(2+) as cofactor.

The catalysed reaction is (19E)-geissoschizine + NADP(+) = 4,21-dehydrogeissoschizine + NADPH. The enzyme catalyses (19E)-geissoschizine + NADPH + H(+) = (16R,19E)-isositsirikine + NADP(+). It carries out the reaction (19E)-geissoschizine + NADPH + H(+) = (16R,19Z)-isositsirikine + NADP(+). It participates in alkaloid biosynthesis. Its function is as follows. An alcohol dehydrogenase involved in the biosynthesis of seco-iridoid and derivatives monoterpenoid indole alkaloids natural products. Catalyzes the production of geissoschizine and its conversion to (16R)-E-isositsirikine and (16R)-Z-isositsirikine. In Alstonia scholaris (Dogbane), this protein is Geissoschizine synthase.